A 175-amino-acid polypeptide reads, in one-letter code: NADH-ubiquinone oxidoreductase chain 6 (175 aa).

Transmembrane regions (helical) follow at residues 1–21 (MMYI…GFSS), 24–44 (SPVY…GIIM), 51–71 (LGLV…GYTI), 87–107 (VVLS…VWLF), 113–133 (LVGF…GSFG), and 148–168 (YGFW…FIAI).

The protein belongs to the complex I subunit 6 family. In terms of assembly, core subunit of respiratory chain NADH dehydrogenase (Complex I) which is composed of 45 different subunits.

Its subcellular location is the mitochondrion inner membrane. The catalysed reaction is a ubiquinone + NADH + 5 H(+)(in) = a ubiquinol + NAD(+) + 4 H(+)(out). In terms of biological role, core subunit of the mitochondrial membrane respiratory chain NADH dehydrogenase (Complex I) which catalyzes electron transfer from NADH through the respiratory chain, using ubiquinone as an electron acceptor. Essential for the catalytic activity and assembly of complex I. This is NADH-ubiquinone oxidoreductase chain 6 (MT-ND6) from Mammuthus primigenius (Siberian woolly mammoth).